A 139-amino-acid polypeptide reads, in one-letter code: MATMQCDVVSVKESLYSGAVTMLIAKGAGGELGILPGHAPLVTLLQLGPIRVLLENGTEEIVYVSGGVLEVQPHVVTVLADTAIRADNLDEAAILEARKNAEQLLANQKSDLDSAAALAALAETAAQLETIRKIKNRAQ.

Belongs to the ATPase epsilon chain family. In terms of assembly, F-type ATPases have 2 components, CF(1) - the catalytic core - and CF(0) - the membrane proton channel. CF(1) has five subunits: alpha(3), beta(3), gamma(1), delta(1), epsilon(1). CF(0) has three main subunits: a, b and c.

It localises to the cell inner membrane. Its function is as follows. Produces ATP from ADP in the presence of a proton gradient across the membrane. In Acinetobacter baumannii (strain SDF), this protein is ATP synthase epsilon chain.